The chain runs to 408 residues: Multidrug resistance protein MdtG (408 aa).

The next 11 membrane-spanning stretches (helical) occupy residues 16–36 (LIVA…VMPF), 58–78 (IVFS…GGLA), 92–112 (LGMG…QFLI), 115–135 (ALLG…ATQV), 146–166 (TLST…GLLA), 173–193 (PVFF…LLCI), 224–244 (LFVT…ILTL), 253–273 (VGNI…AALL), 290–310 (ILIA…FVQT), 319–339 (FLLG…LVYN), and 378–398 (AVFL…WNSL).

The protein belongs to the major facilitator superfamily. DHA1 family. MdtG (TC 2.A.1.2.20) subfamily.

It localises to the cell inner membrane. Confers resistance to fosfomycin and deoxycholate. This Escherichia fergusonii (strain ATCC 35469 / DSM 13698 / CCUG 18766 / IAM 14443 / JCM 21226 / LMG 7866 / NBRC 102419 / NCTC 12128 / CDC 0568-73) protein is Multidrug resistance protein MdtG.